The primary structure comprises 678 residues: Probable 3',5'-cyclic phosphodiesterase pde-3 (678 aa).

Disordered stretches follow at residues methionine 1–threonine 27, alanine 52–glycine 95, and threonine 223–glutamate 250. Residues alanine 7 to glycine 19 are compositionally biased toward low complexity. 2 stretches are compositionally biased toward polar residues: residues threonine 60–valine 85 and alanine 231–asparagine 246. Residues arginine 281 to glutamate 632 form the PDEase domain. The active-site Proton donor is the histidine 356. 4 residues coordinate a divalent metal cation: histidine 360, histidine 421, aspartate 422, and aspartate 531. The disordered stretch occupies residues glutamate 654–glutamine 678.

The protein belongs to the cyclic nucleotide phosphodiesterase family. A divalent metal cation serves as cofactor.

It carries out the reaction a nucleoside 3',5'-cyclic phosphate + H2O = a nucleoside 5'-phosphate + H(+). In Caenorhabditis elegans, this protein is Probable 3',5'-cyclic phosphodiesterase pde-3 (pde-3).